A 295-amino-acid polypeptide reads, in one-letter code: Protoheme IX farnesyltransferase (295 aa).

A run of 7 helical transmembrane segments spans residues 43–63 (PIQLALLVLGTSAAAGGVAAL), 92–112 (SAFVLGVLMCIGSLFLLYALV), 114–134 (PLAALFTLLTIFSYLGWYTPA), 140–160 (WSTEIGAVAGAFPPLIGWSAG), 166–186 (ALGWVLFGVLFFWQVPHFMAV), 231–251 (LLWGLTTWFYGVAAAVTGLWF), and 272–292 (FFASIGYLPLVLGALVIDRLF).

The protein belongs to the UbiA prenyltransferase family. Protoheme IX farnesyltransferase subfamily.

Its subcellular location is the cell inner membrane. It catalyses the reaction heme b + (2E,6E)-farnesyl diphosphate + H2O = Fe(II)-heme o + diphosphate. It functions in the pathway porphyrin-containing compound metabolism; heme O biosynthesis; heme O from protoheme: step 1/1. In terms of biological role, converts heme B (protoheme IX) to heme O by substitution of the vinyl group on carbon 2 of heme B porphyrin ring with a hydroxyethyl farnesyl side group. The sequence is that of Protoheme IX farnesyltransferase from Opitutus terrae (strain DSM 11246 / JCM 15787 / PB90-1).